The primary structure comprises 345 residues: Phenylalanine--tRNA ligase alpha subunit (345 aa).

Glu253 serves as a coordination point for Mg(2+).

The protein belongs to the class-II aminoacyl-tRNA synthetase family. Phe-tRNA synthetase alpha subunit type 1 subfamily. In terms of assembly, tetramer of two alpha and two beta subunits. It depends on Mg(2+) as a cofactor.

It localises to the cytoplasm. It carries out the reaction tRNA(Phe) + L-phenylalanine + ATP = L-phenylalanyl-tRNA(Phe) + AMP + diphosphate + H(+). The sequence is that of Phenylalanine--tRNA ligase alpha subunit from Nitratidesulfovibrio vulgaris (strain DSM 19637 / Miyazaki F) (Desulfovibrio vulgaris).